Reading from the N-terminus, the 67-residue chain is DNA-directed RNA polymerase subunit omega (67 aa).

The protein belongs to the RNA polymerase subunit omega family. As to quaternary structure, the RNAP catalytic core consists of 2 alpha, 1 beta, 1 beta' and 1 omega subunit. When a sigma factor is associated with the core the holoenzyme is formed, which can initiate transcription.

It carries out the reaction RNA(n) + a ribonucleoside 5'-triphosphate = RNA(n+1) + diphosphate. Functionally, promotes RNA polymerase assembly. Latches the N- and C-terminal regions of the beta' subunit thereby facilitating its interaction with the beta and alpha subunits. The chain is DNA-directed RNA polymerase subunit omega from Cupriavidus metallidurans (strain ATCC 43123 / DSM 2839 / NBRC 102507 / CH34) (Ralstonia metallidurans).